A 652-amino-acid polypeptide reads, in one-letter code: DNA ligase (652 aa).

NAD(+) contacts are provided by residues 29–33, 78–79, and Glu107; these read DSDYD and SL. Lys109 serves as the catalytic N6-AMP-lysine intermediate. Residues Arg130, Glu164, Lys278, and Lys302 each coordinate NAD(+). Zn(2+) contacts are provided by Cys395, Cys398, Cys413, and Cys418. One can recognise a BRCT domain in the interval 577-652; that stretch reads NSDAALFGLT…IEDEDWLRQL (76 aa).

The protein belongs to the NAD-dependent DNA ligase family. LigA subfamily. Mg(2+) is required as a cofactor. Mn(2+) serves as cofactor.

The enzyme catalyses NAD(+) + (deoxyribonucleotide)n-3'-hydroxyl + 5'-phospho-(deoxyribonucleotide)m = (deoxyribonucleotide)n+m + AMP + beta-nicotinamide D-nucleotide.. In terms of biological role, DNA ligase that catalyzes the formation of phosphodiester linkages between 5'-phosphoryl and 3'-hydroxyl groups in double-stranded DNA using NAD as a coenzyme and as the energy source for the reaction. It is essential for DNA replication and repair of damaged DNA. The polypeptide is DNA ligase (Streptococcus pyogenes serotype M4 (strain MGAS10750)).